A 311-amino-acid chain; its full sequence is MQENQQITKKEQYNLNKLQKRLRRNVGEAIADFNMIEEGDRIMVCLSGGKDSYTMLEILRNLQQSAPINFSLVAVNLDQKQPGFPEHVLPVYLEKLGVEYKIVEENTYGIVKEKIPEGKTTCSLCSRLRRGILYRTATELGATKIALGHHRDDILQTLFLNMFYGGKMKGMPPKLMSDDGKHIVIRPLAYCREKDIQRFADAKAFPIIPCNLCGSQPNLQRQVIADMLRDWDKRYPGRIETMFSAMQNVVPSHLCDTNLFDFKGITHGSEVVNGGDLAFDREEIPLQPAGWQPEEEENQLDELRLNVVEVK.

The PP-loop motif signature appears at 47 to 52 (SGGKDS). Positions 122, 125, and 213 each coordinate [4Fe-4S] cluster.

Belongs to the TtcA family. Homodimer. Requires Mg(2+) as cofactor. [4Fe-4S] cluster is required as a cofactor.

It is found in the cytoplasm. The enzyme catalyses cytidine(32) in tRNA + S-sulfanyl-L-cysteinyl-[cysteine desulfurase] + AH2 + ATP = 2-thiocytidine(32) in tRNA + L-cysteinyl-[cysteine desulfurase] + A + AMP + diphosphate + H(+). It functions in the pathway tRNA modification. Its function is as follows. Catalyzes the ATP-dependent 2-thiolation of cytidine in position 32 of tRNA, to form 2-thiocytidine (s(2)C32). The sulfur atoms are provided by the cysteine/cysteine desulfurase (IscS) system. In Shigella boydii serotype 18 (strain CDC 3083-94 / BS512), this protein is tRNA-cytidine(32) 2-sulfurtransferase.